Here is a 238-residue protein sequence, read N- to C-terminus: Demethylmenaquinone methyltransferase (238 aa).

S-adenosyl-L-methionine contacts are provided by residues threonine 65, aspartate 85, and 109–110 (DA).

This sequence belongs to the class I-like SAM-binding methyltransferase superfamily. MenG/UbiE family.

The catalysed reaction is a 2-demethylmenaquinol + S-adenosyl-L-methionine = a menaquinol + S-adenosyl-L-homocysteine + H(+). The protein operates within quinol/quinone metabolism; menaquinone biosynthesis; menaquinol from 1,4-dihydroxy-2-naphthoate: step 2/2. Functionally, methyltransferase required for the conversion of demethylmenaquinol (DMKH2) to menaquinol (MKH2). The protein is Demethylmenaquinone methyltransferase of Roseiflexus castenholzii (strain DSM 13941 / HLO8).